A 476-amino-acid chain; its full sequence is Eukaryotic translation initiation factor 3 subunit L (476 aa).

The 196-residue stretch at 257–452 (DAIRMFSHIL…DLDYALENDL (196 aa)) folds into the PCI domain.

It belongs to the eIF-3 subunit L family. Component of the eukaryotic translation initiation factor 3 (eIF-3) complex.

The protein localises to the cytoplasm. Functionally, component of the eukaryotic translation initiation factor 3 (eIF-3) complex, which is involved in protein synthesis of a specialized repertoire of mRNAs and, together with other initiation factors, stimulates binding of mRNA and methionyl-tRNAi to the 40S ribosome. The eIF-3 complex specifically targets and initiates translation of a subset of mRNAs involved in cell proliferation. This Neosartorya fischeri (strain ATCC 1020 / DSM 3700 / CBS 544.65 / FGSC A1164 / JCM 1740 / NRRL 181 / WB 181) (Aspergillus fischerianus) protein is Eukaryotic translation initiation factor 3 subunit L.